Consider the following 37-residue polypeptide: Cytochrome b6-f complex subunit 5 (37 aa).

The helical transmembrane segment at 5–25 (SLFGIVLGLIPITLAGLFVTA) threads the bilayer.

Belongs to the PetG family. As to quaternary structure, the 4 large subunits of the cytochrome b6-f complex are cytochrome b6, subunit IV (17 kDa polypeptide, PetD), cytochrome f and the Rieske protein, while the 4 small subunits are PetG, PetL, PetM and PetN. The complex functions as a dimer.

The protein resides in the plastid. The protein localises to the chloroplast thylakoid membrane. In terms of biological role, component of the cytochrome b6-f complex, which mediates electron transfer between photosystem II (PSII) and photosystem I (PSI), cyclic electron flow around PSI, and state transitions. PetG is required for either the stability or assembly of the cytochrome b6-f complex. This chain is Cytochrome b6-f complex subunit 5, found in Arabis hirsuta (Hairy rock-cress).